We begin with the raw amino-acid sequence, 265 residues long: Aliphatic sulfonates import ATP-binding protein SsuB 1 (265 aa).

The ABC transporter domain maps to 31 to 255; it reads FAFKGVEKRF…RRGSAELARL (225 aa). 63–70 is a binding site for ATP; it reads GKSGCGKS.

This sequence belongs to the ABC transporter superfamily. Aliphatic sulfonates importer (TC 3.A.1.17.2) family. The complex is composed of two ATP-binding proteins (SsuB), two transmembrane proteins (SsuC) and a solute-binding protein (SsuA).

It is found in the cell inner membrane. It catalyses the reaction ATP + H2O + aliphatic sulfonate-[sulfonate-binding protein]Side 1 = ADP + phosphate + aliphatic sulfonateSide 2 + [sulfonate-binding protein]Side 1.. Its function is as follows. Part of the ABC transporter complex SsuABC involved in aliphatic sulfonates import. Responsible for energy coupling to the transport system. This is Aliphatic sulfonates import ATP-binding protein SsuB 1 from Mesorhizobium japonicum (strain LMG 29417 / CECT 9101 / MAFF 303099) (Mesorhizobium loti (strain MAFF 303099)).